The chain runs to 102 residues: NADH-quinone oxidoreductase subunit K (102 aa).

Helical transmembrane passes span 5–25 (IAHYLTVSAVLFTLGIFGIFL), 31–51 (IIILMSIELILLAVNLNFIAF), and 66–86 (FVLTVAAAEAAIGLAILVVFF).

It belongs to the complex I subunit 4L family. As to quaternary structure, NDH-1 is composed of 14 different subunits. Subunits NuoA, H, J, K, L, M, N constitute the membrane sector of the complex.

Its subcellular location is the cell inner membrane. It catalyses the reaction a quinone + NADH + 5 H(+)(in) = a quinol + NAD(+) + 4 H(+)(out). In terms of biological role, NDH-1 shuttles electrons from NADH, via FMN and iron-sulfur (Fe-S) centers, to quinones in the respiratory chain. The immediate electron acceptor for the enzyme in this species is believed to be ubiquinone. Couples the redox reaction to proton translocation (for every two electrons transferred, four hydrogen ions are translocated across the cytoplasmic membrane), and thus conserves the redox energy in a proton gradient. The polypeptide is NADH-quinone oxidoreductase subunit K (Chelativorans sp. (strain BNC1)).